Here is a 236-residue protein sequence, read N- to C-terminus: 2,3,4,5-tetrahydropyridine-2,6-dicarboxylate N-acetyltransferase (236 aa).

Belongs to the transferase hexapeptide repeat family. DapH subfamily.

The enzyme catalyses (S)-2,3,4,5-tetrahydrodipicolinate + acetyl-CoA + H2O = L-2-acetamido-6-oxoheptanedioate + CoA. Its pathway is amino-acid biosynthesis; L-lysine biosynthesis via DAP pathway; LL-2,6-diaminopimelate from (S)-tetrahydrodipicolinate (acetylase route): step 1/3. In terms of biological role, catalyzes the transfer of an acetyl group from acetyl-CoA to tetrahydrodipicolinate. This chain is 2,3,4,5-tetrahydropyridine-2,6-dicarboxylate N-acetyltransferase, found in Listeria monocytogenes serotype 4b (strain CLIP80459).